A 2493-amino-acid chain; its full sequence is Polyprotein P1234 (2493 aa).

One can recognise an Alphavirus-like MT domain in the interval 28–259; sequence EAKQVTDNDH…EKRDLLRSWH (232 aa). The tract at residues 244–263 is nsP1 membrane-binding; it reads GSTIYHEKRDLLRSWHLPSV. The S-palmitoyl cysteine; by host moiety is linked to residue cysteine 419. Residues 690–841 form the (+)RNA virus helicase ATP-binding domain; sequence ELVDPPFHEF…HEICTQVFHK (152 aa). 721-728 contributes to the a ribonucleoside 5'-triphosphate binding site; the sequence is GVPGSGKS. The 149-residue stretch at 842–990 folds into the (+)RNA virus helicase C-terminal domain; it reads SISRRCTKSV…IEEWQAEHDA (149 aa). The 320-residue stretch at 1003 to 1322 folds into the Peptidase C9 domain; sequence DVFQNKANVC…STLTNIYTGS (320 aa). The nucleolus localization signal stretch occupies residues 1004-1023; sequence VFQNKANVCWAKALVPVLKT. Residue cysteine 1012 is the For cysteine protease nsP2 activity of the active site. The Nuclear export signal motif lies at 1056 to 1065; it reads VRFFGLDLDS. Histidine 1081 serves as the catalytic For cysteine protease nsP2 activity. The Nuclear localization signal motif lies at 1179–1183; it reads PGKKV. A Macro domain is found at 1330–1489; sequence APSYHVVRGD…TLKEAVARRE (160 aa). Residues aspartate 1339, asparagine 1353, glycine 1361, glycine 1441, isoleucine 1442, and phenylalanine 1443 each coordinate ADP-D-ribose. Residues cysteine 1596, cysteine 1598, cysteine 1621, and cysteine 1639 each coordinate Zn(2+). Disordered regions lie at residues 1664–1684 and 1790–1826; these read PVEETPESPAENQSTEGTPEQ and APRTVFRNPPHPAPRTRTPPLAHSRASSRTSLVSTPP. The span at 1814-1823 shows a compositional bias: polar residues; the sequence is RASSRTSLVS. 2 tandem repeats follow at residues 1818-1839 and 1852-1873. Positions 1818–1873 are 2 X 21 AA approximate repeats, binding to host FXR family members; sequence RTSLVSTPPGVNRVITREELEALTPSRAPSRSASRTSLVSNPPGVNRVITREEFEA. In terms of domain architecture, RdRp catalytic spans 2250–2365; the sequence is DCVLETDIAS…KGVKSDKLMA (116 aa).

Interacts with non-structural protein 3. Interacts with RNA-directed RNA polymerase nsP4. Interacts with protease nsP2. interacts with itself. In terms of assembly, interacts with mRNA-capping enzyme nsP1. Interacts with host DDX1. Interacts with host DDX3. Interacts (via C-terminus) with host FXR1; this interaction inhibits the formation of host stress granules on viral mRNAs and the nsp3-FXR1 complexes bind viral RNAs and probably orchestrate the assembly of viral replication complexes. Interacts (via C-terminus) with host FXR2; this interaction inhibits the formation of host stress granules on viral mRNAs and the nsp3-FXR2 complexes bind viral RNAs and probably orchestrate the assembly of viral replication complexes. Interacts (via C-terminus) with host FMR1; this interaction inhibits the formation of host stress granules on viral mRNAs and the nsp3-FMR1 complexes bind viral RNAs and probably orchestrate the assembly of viral replication complexes. As to quaternary structure, interacts with mRNA-capping enzyme nsP1. Interacts with protease nsP2. interacts with itself. Interacts with RNA-directed RNA polymerase nsP4. Interacts with mRNA-capping enzyme nsP1. Interacts with KPNA1/karyopherin-alpha1; this interaction probably allows the active transport of protease nsP2 into the host nucleus. Mg(2+) serves as cofactor. It depends on Mn(2+) as a cofactor. Specific enzymatic cleavages in vivo yield mature proteins. The processing of the polyprotein is temporally regulated. In early stages (1.7 hpi), P1234 is first cleaved in trans through its nsP2 protease activity, releasing P123' and nsP4, which associate to form the early replication complex. At the same time, P1234 is also cut at the nsP1/nsP2 site early in infection but with lower efficiency. After replication of the viral minus-strand RNAs (4 hpi), the polyproteins are cut at the nsP1/nsP2 and nsP2/nsP3 sites very efficiently, preventing accumulation of P123' and P1234 and allowing the formation of the late replication complex. NsP3'/nsP4 site is not cleaved anymore and P34 is produced rather than nsP4. Post-translationally, specific enzymatic cleavages in vivo yield mature proteins. The processing of the polyprotein is temporally regulated. In early stages (1.7 hpi), P123 is cleaved at the nsP1/nsP2 site with low efficiency. After replication of the viral minus-strand RNAs (4 hpi), the polyproteins are cut at the nsP1/nsP2 and nsP2/nsP3 sites very efficiently, preventing accumulation of P123 and allowing the formation of the late replication complex. In terms of processing, specific enzymatic cleavages in vivo yield mature proteins. The processing of the polyprotein is temporally regulated. In early stages (1.7 hpi), P123' is cleaved at the nsP1/nsP2 site with low efficiency. After replication of the viral minus-strand RNAs (4 hpi), the polyproteins are cut at the nsP1/nsP2 and nsP2/nsP3 sites very efficiently, preventing accumulation of P123' and allowing the formation of the late replication complex. Palmitoylated by host palmitoyltransferases ZDHHC2 and ZDHHC19. Post-translationally, phosphorylated by host on serines and threonines. In terms of processing, ubiquitinated; targets the protein for rapid degradation via the ubiquitin system. Nsp4 is present in extremely low quantities due to low frequency of translation through the amber stop-codon and the degradation by the ubiquitin pathway.

Its subcellular location is the host cytoplasmic vesicle membrane. The protein localises to the host cell membrane. It localises to the host cell projection. The protein resides in the host filopodium. It is found in the host nucleus. Its subcellular location is the host cytoplasm. It catalyses the reaction GTP + S-adenosyl-L-methionine = N(7)-methyl-GTP + S-adenosyl-L-homocysteine. The catalysed reaction is N(7)-methyl-GTP + L-histidyl-[protein] = N(tele)-(N(7)-methylguanosine 5'-phospho)-L-histidyl-[protein] + diphosphate. The enzyme catalyses N(tele)-(N(7)-methylguanosine 5'-phospho)-L-histidyl-[protein] + a 5'-end diphospho-(purine-ribonucleoside) in mRNA + H(+) = a 5'-end (N(7)-methyl 5'-triphosphoguanosine)-(purine-ribonucleoside) in mRNA + L-histidyl-[protein]. It carries out the reaction a 5'-end triphospho-ribonucleoside in mRNA + H2O = a 5'-end diphospho-ribonucleoside in mRNA + phosphate + H(+). It catalyses the reaction a ribonucleoside 5'-triphosphate + H2O = a ribonucleoside 5'-diphosphate + phosphate + H(+). The catalysed reaction is ATP + H2O = ADP + phosphate + H(+). The enzyme catalyses RNA(n) + a ribonucleoside 5'-triphosphate = RNA(n+1) + diphosphate. It carries out the reaction 4-O-(ADP-D-ribosyl)-L-aspartyl-[protein] + H2O = L-aspartyl-[protein] + ADP-D-ribose + H(+). It catalyses the reaction 5-O-(ADP-D-ribosyl)-L-glutamyl-[protein] + H2O = L-glutamyl-[protein] + ADP-D-ribose + H(+). The catalysed reaction is RNA(n) + ATP = RNA(n)-3'-adenine ribonucleotide + diphosphate. The enzyme catalyses ADP-alpha-D-ribose 1''-phosphate + H2O = ADP-D-ribose + phosphate. With respect to regulation, inhibited by sinefungin. In terms of biological role, inactive precursor of the viral replicase, which is activated by cleavages carried out by the viral protease nsP2. Functionally, the early replication complex formed by the polyprotein P123 and nsP4 synthesizes the minus-strand RNAs (antigenome). Polyprotein P123 is a short-lived polyprotein that accumulates during early stage of infection. As soon P123 is cleaved into mature proteins, the plus-strand RNAs synthesis begins. Its function is as follows. The early replication complex formed by the polyprotein P123' and nsP4 synthesizes minus-strand RNAs (antigenome). Polyprotein P123' is a short-lived polyprotein that accumulates during early stage of infection. As soon P123' is cleaved into mature proteins, the plus-strand RNAs synthesis begins. Cytoplasmic capping enzyme that catalyzes two virus-specific reactions: methyltransferase and nsP1 guanylyltransferase. mRNA-capping is necessary since all viral RNAs are synthesized in the cytoplasm, and host capping enzymes are restricted to the nucleus. The enzymatic reaction involves a covalent link between 7-methyl-GMP and nsP1, whereas eukaryotic capping enzymes form a covalent complex only with GMP. NsP1 capping consists in the following reactions: GTP is first methylated into 7-methyl-GMP and then is covalently linked to nsP1 to form the m7GMp-nsP1 complex from which 7-methyl-GMP complex is transferred to the mRNA to create the cap structure. NsP1 is also needed for the initiation of the minus-strand RNAs synthesis. Probably serves as a membrane anchor for the replication complex composed of nsP1-nsP4. Nsp1 is needed for the initiation of the minus-strand RNAs synthesis. Palmitoylated nsP1 is remodeling host cell cytoskeleton, and induces filopodium-like structure formation at the surface of the host cell. In terms of biological role, multifunctional protein whose N-terminus is part of the RNA polymerase complex and displays NTPase, RNA triphosphatase and helicase activities. NTPase and RNA triphosphatase are involved in viral RNA capping and helicase keeps a check on the dsRNA replication intermediates. The C-terminus harbors a protease that specifically cleaves the polyproteins and releases the mature proteins. Required for the shutoff of minus-strand RNAs synthesis. Inhibits host translation to ensure maximal viral gene expression and evade host immune response. Functionally, seems to be essential for minus-strand RNAs and subgenomic 26S mRNAs synthesis. Displays mono-ADP-ribosylhydrolase activity. ADP-ribosylation is a post-translational modification that controls various processes of the host cell and the virus probably needs to revert it for optimal viral replication. Binds proteins of FXR family and sequesters them into the viral RNA replication complexes thereby inhibiting the formation of host stress granules on viral mRNAs. The nsp3-FXR complexes bind viral RNAs and probably orchestrate the assembly of viral replication complexes, thanks to the ability of FXR family members to self-assemble and bind DNA. Its function is as follows. Seems to be essential for minus-strand RNAs and subgenomic 26S mRNAs synthesis. Displays mono-ADP-ribosylhydrolase activity. ADP-ribosylation is a post-translational modification that controls various processes of the host cell and the virus probably needs to revert it for optimal viral replication. Binds proteins of FXR family and sequesters them into the viral RNA replication complexes thereby inhibiting the formation of host stress granules on viral mRNAs. The nsp3'-FXR complexes bind viral RNAs and probably orchestrate the assembly of viral replication complexes, thanks to the ability of FXR family members to self-assemble and bind DNA. RNA dependent RNA polymerase. Replicates genomic and antigenomic RNA by recognizing replications specific signals. The early replication complex formed by the polyprotein P123 and nsP4 synthesizes minus-strand RNAs. The late replication complex composed of fully processed nsP1-nsP4 is responsible for the production of genomic and subgenomic plus-strand RNAs. The sequence is that of Polyprotein P1234 from Bos taurus (Bovine).